A 110-amino-acid chain; its full sequence is Large ribosomal subunit protein uL22 (110 aa).

The protein belongs to the universal ribosomal protein uL22 family. In terms of assembly, part of the 50S ribosomal subunit.

Its function is as follows. This protein binds specifically to 23S rRNA; its binding is stimulated by other ribosomal proteins, e.g. L4, L17, and L20. It is important during the early stages of 50S assembly. It makes multiple contacts with different domains of the 23S rRNA in the assembled 50S subunit and ribosome. In terms of biological role, the globular domain of the protein is located near the polypeptide exit tunnel on the outside of the subunit, while an extended beta-hairpin is found that lines the wall of the exit tunnel in the center of the 70S ribosome. This Syntrophus aciditrophicus (strain SB) protein is Large ribosomal subunit protein uL22.